The chain runs to 842 residues: Type VI secretion system spike protein VgrG2a (842 aa).

The disordered stretch occupies residues 265–291 (RSGAGRPFSESRLRGHRRDARVASVSG).

Belongs to the VgrG protein family.

In terms of biological role, part of the H2 type VI secretion system (H2-T6SS) specialized secretion system, which delivers several virulence factors in both prokaryotic and eukaryotic cells during infection. May form the spike at the tip of the elongating tube formed by haemolysin co-regulated protein 2a/Hcp2a. In turn, may allow the delivery of the Tle4 antibacterial toxin to target cells where it exerts its toxicity. Also promotes the release of VgrG2b toxin to the host cell. The protein is Type VI secretion system spike protein VgrG2a of Pseudomonas aeruginosa (strain ATCC 15692 / DSM 22644 / CIP 104116 / JCM 14847 / LMG 12228 / 1C / PRS 101 / PAO1).